The sequence spans 73 residues: MRTLCSLLLICCLLFSYTTPAVGDLKHLILKAQLTRCYKFGGFCHYNICPGNSRFMSNCHPENLRCCKNIKQF.

The N-terminal stretch at 1–23 (MRTLCSLLLICCLLFSYTTPAVG) is a signal peptide. 3 disulfides stabilise this stretch: Cys37–Cys66, Cys44–Cys59, and Cys49–Cys67.

This sequence belongs to the beta-defensin family. As to expression, expressed in both adult and neonate brain, and very weakly in kidneys, epididymis, and testis.

The protein resides in the secreted. Its function is as follows. Has antibacterial activity. This Mus musculus (Mouse) protein is Beta-defensin 10 (Defb10).